The primary structure comprises 554 residues: MCIPRKYSSQVVDGFERAPSRAMLYPIGFKKDDFSKPQVGIASTWSMVTPCNMHINKLADKAEKGINNAGGKGVIFNTITISDGISMGSEGMKYSLVSREVIADSIETVVGCQGFDGVVAIGGCDKNMPGCIIGLARLNRPSIFVYGGTIQPGKNRTDVVSVFEAVGRFSNHEIDEIELENIEKTAVTGAGSCGGMYTANTMASAIEALGMSLPNSSAQNAISDDKNNDCIQAGEAILTLLNKDIKPRDIMTMKAFENAITVIIALGGSTNAVLHLIAMANAAEVNLKIDDFTRIGKKVPVIADLKPSGKYMMSELVEIGGTLPLMKMLLDAGLLHGDCMTVTGKTLAKNLKNVQSYADSQEIIRALDNPIKKDSHLRILRGNLAINGAVAKITGKEGSSFKGTAKCFSHEEGALKAILNDQIKAGNVIVIRYEGPVGGPGMREMLAPTSAVMGKGLGGKIALITDGRFSGGTHGFVVGHITPEAFKGGVLAVVEDGDEIIIDAQNNVLELLVDQAIIDKRLSKWTQPKPNYTKGVLAKFAKLAKSASEGAVTD.

Residue Cys-51 coordinates [2Fe-2S] cluster. Residue Asp-83 participates in Mg(2+) binding. Residue Cys-124 participates in [2Fe-2S] cluster binding. Mg(2+) contacts are provided by Asp-125 and Lys-126. An N6-carboxylysine modification is found at Lys-126. Cys-193 serves as a coordination point for [2Fe-2S] cluster. Residue Glu-444 participates in Mg(2+) binding. Catalysis depends on Ser-470, which acts as the Proton acceptor.

The protein belongs to the IlvD/Edd family. In terms of assembly, homodimer. The cofactor is [2Fe-2S] cluster. It depends on Mg(2+) as a cofactor.

The catalysed reaction is (2R)-2,3-dihydroxy-3-methylbutanoate = 3-methyl-2-oxobutanoate + H2O. It catalyses the reaction (2R,3R)-2,3-dihydroxy-3-methylpentanoate = (S)-3-methyl-2-oxopentanoate + H2O. The protein operates within amino-acid biosynthesis; L-isoleucine biosynthesis; L-isoleucine from 2-oxobutanoate: step 3/4. Its pathway is amino-acid biosynthesis; L-valine biosynthesis; L-valine from pyruvate: step 3/4. In terms of biological role, functions in the biosynthesis of branched-chain amino acids. Catalyzes the dehydration of (2R,3R)-2,3-dihydroxy-3-methylpentanoate (2,3-dihydroxy-3-methylvalerate) into 2-oxo-3-methylpentanoate (2-oxo-3-methylvalerate) and of (2R)-2,3-dihydroxy-3-methylbutanoate (2,3-dihydroxyisovalerate) into 2-oxo-3-methylbutanoate (2-oxoisovalerate), the penultimate precursor to L-isoleucine and L-valine, respectively. The polypeptide is Dihydroxy-acid dehydratase (Vesicomyosocius okutanii subsp. Calyptogena okutanii (strain HA)).